The sequence spans 1381 residues: Hepatocyte growth factor receptor (1381 aa).

The signal sequence occupies residues 1–24 (MKAPAVLAPGILVLLFTLVQKSDG). The Extracellular portion of the chain corresponds to 25–934 (ECKEALVKSE…VQPDQNFTGL (910 aa)). A Sema domain is found at 27–515 (KEALVKSEMN…TGKKITKIPL (489 aa)). Asn-45 carries an N-linked (GlcNAc...) asparagine glycan. 4 disulfides stabilise this stretch: Cys-95/Cys-101, Cys-98/Cys-160, Cys-133/Cys-141, and Cys-172/Cys-175. N-linked (GlcNAc...) asparagine glycosylation occurs at Asn-106. Asn-202 and Asn-358 each carry an N-linked (GlcNAc...) asparagine glycan. Intrachain disulfides connect Cys-298-Cys-363 and Cys-385-Cys-397. N-linked (GlcNAc...) asparagine glycans are attached at residues Asn-399, Asn-405, and Asn-449. 4 disulfide bridges follow: Cys-520-Cys-538, Cys-526-Cys-561, Cys-529-Cys-545, and Cys-541-Cys-551. Residue Asn-553 is glycosylated (N-linked (GlcNAc...) asparagine). IPT/TIG domains follow at residues 563 to 655 (PTIY…FSYV), 657 to 739 (PIIT…FSYR), and 742 to 836 (PIVY…LIYV). Thr-582 carries an O-linked (Man) threonine glycan. Asn-607 and Asn-635 each carry an N-linked (GlcNAc...) asparagine glycan. Thr-676 and Thr-761 each carry an O-linked (Man) threonine glycan. 3 N-linked (GlcNAc...) asparagine glycosylation sites follow: Asn-785, Asn-879, and Asn-930. Residues 935–955 (IVGVVSISIILLLLLGLFLWL) form a helical membrane-spanning segment. At 956–1381 (KRRKQIKDLG…QDNVDGEVDT (426 aa)) the chain is on the cytoplasmic side. A Phosphoserine modification is found at Ser-966. Thr-977 is subject to Phosphothreonine. Residues Ser-990, Ser-997, and Ser-1000 each carry the phosphoserine modification. Tyr-1003 bears the Phosphotyrosine mark. The Protein kinase domain maps to 1078-1345 (VHFNEVIGRG…RISAIFSTFI (268 aa)). ATP is bound by residues 1084–1092 (IGRGHFGCV) and Lys-1110. Residue Asp-1204 is the Proton acceptor of the active site. An interaction with RANBP9 region spans residues 1212-1381 (LDEKFTVKVA…QDNVDGEVDT (170 aa)). Tyr-1230 carries the post-translational modification Phosphotyrosine. 2 positions are modified to phosphotyrosine; by autocatalysis: Tyr-1234 and Tyr-1235. Thr-1289 is modified (phosphothreonine). The interval 1320–1359 (WHPKAELRPSFSELVSRISAIFSTFIGEHYVHVNATYVNV) is interaction with MUC20. A phosphotyrosine; by autocatalysis mark is found at Tyr-1349 and Tyr-1356. At Tyr-1365 the chain carries Phosphotyrosine.

It belongs to the protein kinase superfamily. Tyr protein kinase family. Heterodimer made of an alpha chain (50 kDa) and a beta chain (145 kDa) which are disulfide linked. Binds PLXNB1. Interacts when phosphorylated with downstream effectors including STAT3, PIK3R1, SRC, PCLG1, GRB2 and GAB1. Interacts with SPSB1, SPSB2 and SPSB4. Interacts with INPP5D/SHIP1. When phosphorylated at Tyr-1356, interacts with INPPL1/SHIP2. Interacts with RANBP9 and RANBP10, as well as SPSB1, SPSB2, SPSB3 and SPSB4. SPSB1 binding occurs in the presence and in the absence of HGF, however HGF treatment has a positive effect on this interaction. Interacts with MUC20; prevents interaction with GRB2 and suppresses hepatocyte growth factor-induced cell proliferation. Interacts with GRB10. Interacts with PTPN1 and PTPN2. Interacts with HSP90AA1 and HSP90AB1; the interaction suppresses MET kinase activity. Interacts with tensin TNS3. Interacts (when phosphorylated) with tensin TNS4 (via SH2 domain); the interaction increases MET protein stability by inhibiting MET endocytosis and subsequent lysosomal degradation. In terms of processing, autophosphorylated in response to ligand binding on Tyr-1234 and Tyr-1235 in the kinase domain leading to further phosphorylation of Tyr-1349 and Tyr-1356 in the C-terminal multifunctional docking site. Dephosphorylated by PTPRJ at Tyr-1349 and Tyr-1365. Dephosphorylated by PTPN1 and PTPN2. Ubiquitinated. Ubiquitination by CBL regulates the receptor stability and activity through proteasomal degradation. Post-translationally, O-mannosylation of IPT/TIG domains by TMEM260 is required for protein maturation. O-mannosylated residues are composed of single mannose glycans that are not elongated or modified.

It is found in the membrane. The catalysed reaction is L-tyrosyl-[protein] + ATP = O-phospho-L-tyrosyl-[protein] + ADP + H(+). In its inactive state, the C-terminal tail interacts with the catalytic domain and inhibits the kinase activity. Upon ligand binding, the C-terminal tail is displaced and becomes phosphorylated, thus increasing the kinase activity. Its function is as follows. Receptor tyrosine kinase that transduces signals from the extracellular matrix into the cytoplasm by binding to hepatocyte growth factor/HGF ligand. Regulates many physiological processes including proliferation, scattering, morphogenesis and survival. Ligand binding at the cell surface induces autophosphorylation of MET on its intracellular domain that provides docking sites for downstream signaling molecules. Following activation by ligand, interacts with the PI3-kinase subunit PIK3R1, PLCG1, SRC, GRB2, STAT3 or the adapter GAB1. Recruitment of these downstream effectors by MET leads to the activation of several signaling cascades including the RAS-ERK, PI3 kinase-AKT, or PLCgamma-PKC. The RAS-ERK activation is associated with the morphogenetic effects while PI3K/AKT coordinates prosurvival effects. During embryonic development, MET signaling plays a role in gastrulation, development and migration of muscles and neuronal precursors, angiogenesis and kidney formation. In adults, participates in wound healing as well as organ regeneration and tissue remodeling. Also promotes differentiation and proliferation of hematopoietic cells. This chain is Hepatocyte growth factor receptor (MET), found in Equus caballus (Horse).